A 299-amino-acid chain; its full sequence is MRRAETIAEIRAAVRELRYRENPRLKGETWGTRSIGFVPTMGALHEGHLSLVRAAKAECDAVVASIFVNPTQFGPNEDFGKYPRTVEADCALLEREGVDAVFLPQVEEMYPAGATTWVEVEELSGRLDGASRPGHFRGVATVVAKLFHIVGPDRAYFGQKDAAQVANLRRMVRDLDFDLEVVVCPIVREADGLAMSSRNRYLSVEERRQGLVLSRALRAMEAGHAAGERDGRRLLAAGASVMAEEPAVRVDYLRVVDPETLVDVEAVSGPALATVAAYVGATRLIDNVLLGETPAAFKL.

Position 41-48 (41-48 (MGALHEGH)) interacts with ATP. His-48 (proton donor) is an active-site residue. Gln-72 provides a ligand contact to (R)-pantoate. Gln-72 contacts beta-alanine. Residue 158–161 (GQKD) participates in ATP binding. A (R)-pantoate-binding site is contributed by Gln-164. Residues Val-187 and 195-198 (MSSR) each bind ATP.

Belongs to the pantothenate synthetase family. Homodimer.

The protein localises to the cytoplasm. The enzyme catalyses (R)-pantoate + beta-alanine + ATP = (R)-pantothenate + AMP + diphosphate + H(+). It functions in the pathway cofactor biosynthesis; (R)-pantothenate biosynthesis; (R)-pantothenate from (R)-pantoate and beta-alanine: step 1/1. Its function is as follows. Catalyzes the condensation of pantoate with beta-alanine in an ATP-dependent reaction via a pantoyl-adenylate intermediate. The sequence is that of Pantothenate synthetase from Acidobacterium capsulatum (strain ATCC 51196 / DSM 11244 / BCRC 80197 / JCM 7670 / NBRC 15755 / NCIMB 13165 / 161).